The following is a 142-amino-acid chain: Sec-independent protein translocase protein TatB (142 aa).

A helical transmembrane segment spans residues 1-21; that stretch reads MFDFGFSELVVIGVVMLIVVG. Positions 99-142 are disordered; that stretch reads AAPPDNTTSAESQAAADPAAVDSSQQLELRLDTTPKQVVGSDKA. Residues 107–124 show a composition bias toward low complexity; that stretch reads SAESQAAADPAAVDSSQQ.

It belongs to the TatB family. The Tat system comprises two distinct complexes: a TatABC complex, containing multiple copies of TatA, TatB and TatC subunits, and a separate TatA complex, containing only TatA subunits. Substrates initially bind to the TatABC complex, which probably triggers association of the separate TatA complex to form the active translocon.

It localises to the cell inner membrane. In terms of biological role, part of the twin-arginine translocation (Tat) system that transports large folded proteins containing a characteristic twin-arginine motif in their signal peptide across membranes. Together with TatC, TatB is part of a receptor directly interacting with Tat signal peptides. TatB may form an oligomeric binding site that transiently accommodates folded Tat precursor proteins before their translocation. This Azoarcus sp. (strain BH72) protein is Sec-independent protein translocase protein TatB.